A 95-amino-acid polypeptide reads, in one-letter code: Aspartyl/glutamyl-tRNA(Asn/Gln) amidotransferase subunit C (95 aa).

It belongs to the GatC family. As to quaternary structure, heterotrimer of A, B and C subunits.

The enzyme catalyses L-glutamyl-tRNA(Gln) + L-glutamine + ATP + H2O = L-glutaminyl-tRNA(Gln) + L-glutamate + ADP + phosphate + H(+). It catalyses the reaction L-aspartyl-tRNA(Asn) + L-glutamine + ATP + H2O = L-asparaginyl-tRNA(Asn) + L-glutamate + ADP + phosphate + 2 H(+). Functionally, allows the formation of correctly charged Asn-tRNA(Asn) or Gln-tRNA(Gln) through the transamidation of misacylated Asp-tRNA(Asn) or Glu-tRNA(Gln) in organisms which lack either or both of asparaginyl-tRNA or glutaminyl-tRNA synthetases. The reaction takes place in the presence of glutamine and ATP through an activated phospho-Asp-tRNA(Asn) or phospho-Glu-tRNA(Gln). The sequence is that of Aspartyl/glutamyl-tRNA(Asn/Gln) amidotransferase subunit C from Chlorobaculum parvum (strain DSM 263 / NCIMB 8327) (Chlorobium vibrioforme subsp. thiosulfatophilum).